The following is a 385-amino-acid chain: MKFPSLLSLGVAASTTIVAAVPDQKPIGDIIEDVHLGKFLIELGPGDTRWVTEEEKWGLRRDGRRFFDITAEAGQGVFPKTFAQTTVTFPTELQNVAHVKKLASSLSKNRLQTFLTKFTSFYTRYYKSESGRQSAIWLFEQIEKTIQESSATEARVEKFEHPWGQFSIIATIPGQTNKTVVVGAHQDSINLLMPSILPAPGADDDGSGTATILEALRVLLKSEAVTQGKAPNTVEFHWYSAEEAGLLGSQAVFAQYKQDNRDVKSMLQQDMTGYSKGTTNAGHADSVGIITDFVDEGLTNFIKKVVTGYCGISYVLTKCGYACSDHASASRYGYPSAFVIESKFEYSSKLIHSTRDEVSSLDFDHMLQHAKMTLGLVYELAFADL.

The N-terminal stretch at M1–A20 is a signal peptide. A propeptide spanning residues V21–V87 is cleaved from the precursor. Residue N177 is glycosylated (N-linked (GlcNAc...) asparagine). H185, D204, E243, and D270 together coordinate Zn(2+). C319 and C323 are disulfide-bonded. H352 serves as a coordination point for Zn(2+).

This sequence belongs to the peptidase M28 family. M28E subfamily. As to quaternary structure, monomer. Zn(2+) is required as a cofactor.

The protein localises to the secreted. Extracellular aminopeptidase that allows assimilation of proteinaceous substrates. The protein is Leucine aminopeptidase 1 (LAP1) of Ajellomyces capsulatus (strain G186AR / H82 / ATCC MYA-2454 / RMSCC 2432) (Darling's disease fungus).